The primary structure comprises 310 residues: tRNA dimethylallyltransferase (310 aa).

11–18 (GPTGVGKT) lines the ATP pocket. 13–18 (TGVGKT) is a substrate binding site.

It belongs to the IPP transferase family. Monomer. Mg(2+) is required as a cofactor.

The enzyme catalyses adenosine(37) in tRNA + dimethylallyl diphosphate = N(6)-dimethylallyladenosine(37) in tRNA + diphosphate. Its function is as follows. Catalyzes the transfer of a dimethylallyl group onto the adenine at position 37 in tRNAs that read codons beginning with uridine, leading to the formation of N6-(dimethylallyl)adenosine (i(6)A). The sequence is that of tRNA dimethylallyltransferase from Latilactobacillus sakei subsp. sakei (strain 23K) (Lactobacillus sakei subsp. sakei).